The chain runs to 442 residues: 4-hydroxyphenylpyruvate dioxygenase (442 aa).

2 VOC domains span residues 45–200 and 216–376; these read RFHH…GFEA and RLDH…IFTK. Residues His-219, His-301, and Glu-387 each coordinate Fe cation.

Belongs to the 4HPPD family. Fe cation is required as a cofactor.

It is found in the cytoplasm. It catalyses the reaction 3-(4-hydroxyphenyl)pyruvate + O2 = homogentisate + CO2. It functions in the pathway amino-acid degradation; L-phenylalanine degradation; acetoacetate and fumarate from L-phenylalanine: step 3/6. It participates in cofactor biosynthesis; prenylquinone biosynthesis. The polypeptide is 4-hydroxyphenylpyruvate dioxygenase (Daucus carota (Wild carrot)).